A 99-amino-acid polypeptide reads, in one-letter code: UPF0751 protein BCAH820_B0138 (99 aa).

Belongs to the UPF0751 family.

This chain is UPF0751 protein BCAH820_B0138, found in Bacillus cereus (strain AH820).